We begin with the raw amino-acid sequence, 194 residues long: HTH-type transcriptional regulator BetI (194 aa).

Residues 8 to 68 form the HTH tetR-type domain; that stretch reads EIRRAQLIDA…ATMRHVLRDL (61 aa). Residues 31–50 constitute a DNA-binding region (H-T-H motif); it reads TLASVAQRANISTGIVSHYF.

Its pathway is amine and polyamine biosynthesis; betaine biosynthesis via choline pathway [regulation]. Its function is as follows. Repressor involved in the biosynthesis of the osmoprotectant glycine betaine. It represses transcription of the choline transporter BetT and the genes of BetAB involved in the synthesis of glycine betaine. This Burkholderia ambifaria (strain MC40-6) protein is HTH-type transcriptional regulator BetI.